Reading from the N-terminus, the 1386-residue chain is MAEPVNLIFYNKVMDRTAIKQLISRLIAHFGITYTTHILDQLKTLGFQQATFGAISLGIDDLLTAPSKSWLIEDAEQYGNLSEKHHNYGSLHAVEKLRQLIETWYATSEYLKQEMNPNFRITDPLNPVHMMSFSGARGSTSQVHQLVGMRGLMSDPQGQIIDLPIQSNFREGLSLTEYIISCYGARKGVVDTAVRTSDAGYLTRRLVEVVQHIVVRKVDCGTLYGINVNNLSEKKNNFQQKLIGRVIAENIYIDHRCIAPRNQDIGALLANRLITLKTKQIFLRSPLTCKSMNWICQLCYGWSLSHGNLIEMGEAVGIIAGQSIGEPGTQLTLRTFHTGGVFTGDIAEHVRTPFNGIIEFNENFVYPTRTRHGHPAWMCHTNLFLVIKSKNKVHNLTIPPKSLLLVQNNQYVESKQVIAEIRAKTSPFKEKVQKYIYSNLEGEMHWSTKVRHASEYIHSNIHLILKTCHIWILSGNFHKKNNDLSVLFYKNQDKIDFPISLTKEKNEFSFVKNKTQLNLFLFHFYLYKKNKIFIKSQLTNNILNKINNSKNYNFILQEYNIKKKKNFYFLKNKNLTCPLFLKIKKNGVLKNNEIFAILDDPSYKVKNSGILKYGNIKVDLINQNTNFEDPQTKLFRPRYSIIKEGNFFFIPEEVYVLTQSLSSVFIKNNKFIQAGTLITSNIRSNTNGLVKIQKKGNNNYELKILPGTIYYPNETYKISKQISILIPPGKKLFNEFECKNWTYLQWIMPSKEKPFVLIRPAVEYKISKKLNKSTLFDLLKKNKKVEIKTINYLLYEDDEQIQIINEKNIQLIQTCLLVHWKKKYFFKEANVSFLKIKTKNNFKTFLQISLIEYSNLEKKKEKTISKNVLKKNYYDHFFSISKNELKNKKQGVIRIISNQNNGMQSFIILSSSDLVKTFKFKKLTKNISIKTNTNTSTAKFFEFNKNFKILNKKKKLNLTKKNFSIGLLLFKKLGFLGNLHNIVTNSFSSFYLINYTKLISNKYSIITKFQHTCQNPKWYLIDESKKINKLILGKHINYNLFNWCFPLFSLLKKKIDFQTIKLGQLLFENFVISKYKTSYPSGQIISININYFIIRLAKPYLATGGATIHNNYGEFIKEGDTLITLIYERLKSGDIIQGLPKVEQLLEARPINSVSINLENGFEDWNNDMIKFIGNLWGFFLSTKISMEQGQINLVDQIQKVYQSQGVQISNKHIEIIVRQMTSKVITLEDGMTNVFLPGELIEFSRTQKMNRALEEAVPYKPILLGITKASLNTQSFISEASFQETTRVLAKAALKGRIDWLKGLKENVILGGLVPAGTGSQEVIWQITLEKKKEIYLKKKKEFFTKKINNVFLYQDTFSIFPTTEIIHNVLKESISQNNKNNFSI.

Zn(2+) contacts are provided by Cys-220, Cys-289, Cys-296, and Cys-299.

This sequence belongs to the RNA polymerase beta' chain family. RpoC2 subfamily. As to quaternary structure, in plastids the minimal PEP RNA polymerase catalytic core is composed of four subunits: alpha, beta, beta', and beta''. When a (nuclear-encoded) sigma factor is associated with the core the holoenzyme is formed, which can initiate transcription. The cofactor is Zn(2+).

The protein resides in the plastid. Its subcellular location is the chloroplast. It carries out the reaction RNA(n) + a ribonucleoside 5'-triphosphate = RNA(n+1) + diphosphate. DNA-dependent RNA polymerase catalyzes the transcription of DNA into RNA using the four ribonucleoside triphosphates as substrates. This Marchantia polymorpha (Common liverwort) protein is DNA-directed RNA polymerase subunit beta''.